The primary structure comprises 448 residues: ATP-dependent protease ATPase subunit HslU (448 aa).

ATP-binding positions include V21, 63 to 68 (GVGKTE), D261, E326, and R398.

Belongs to the ClpX chaperone family. HslU subfamily. In terms of assembly, a double ring-shaped homohexamer of HslV is capped on each side by a ring-shaped HslU homohexamer. The assembly of the HslU/HslV complex is dependent on binding of ATP.

The protein localises to the cytoplasm. Its function is as follows. ATPase subunit of a proteasome-like degradation complex; this subunit has chaperone activity. The binding of ATP and its subsequent hydrolysis by HslU are essential for unfolding of protein substrates subsequently hydrolyzed by HslV. HslU recognizes the N-terminal part of its protein substrates and unfolds these before they are guided to HslV for hydrolysis. In Persephonella marina (strain DSM 14350 / EX-H1), this protein is ATP-dependent protease ATPase subunit HslU.